Here is a 265-residue protein sequence, read N- to C-terminus: 3-methyl-2-oxobutanoate hydroxymethyltransferase (265 aa).

Residues D45 and D84 each contribute to the Mg(2+) site. Residues 45-46, D84, and K112 contribute to the 3-methyl-2-oxobutanoate site; that span reads DS. Residue E114 coordinates Mg(2+). Residue E181 is the Proton acceptor of the active site.

The protein belongs to the PanB family. As to quaternary structure, homodecamer; pentamer of dimers. Mg(2+) is required as a cofactor.

It localises to the cytoplasm. It carries out the reaction 3-methyl-2-oxobutanoate + (6R)-5,10-methylene-5,6,7,8-tetrahydrofolate + H2O = 2-dehydropantoate + (6S)-5,6,7,8-tetrahydrofolate. It functions in the pathway cofactor biosynthesis; (R)-pantothenate biosynthesis; (R)-pantoate from 3-methyl-2-oxobutanoate: step 1/2. Functionally, catalyzes the reversible reaction in which hydroxymethyl group from 5,10-methylenetetrahydrofolate is transferred onto alpha-ketoisovalerate to form ketopantoate. The sequence is that of 3-methyl-2-oxobutanoate hydroxymethyltransferase from Yersinia enterocolitica serotype O:8 / biotype 1B (strain NCTC 13174 / 8081).